The sequence spans 136 residues: Small ribosomal subunit protein eS8 (136 aa).

Positions methionine 1–valine 23 are disordered. A compositionally biased stretch (basic residues) spans threonine 13 to valine 23.

Belongs to the eukaryotic ribosomal protein eS8 family. In terms of assembly, part of the 30S ribosomal subunit.

The protein is Small ribosomal subunit protein eS8 of Hyperthermus butylicus (strain DSM 5456 / JCM 9403 / PLM1-5).